Consider the following 499-residue polypeptide: Putative protein phosphatase 2C 76 (499 aa).

The N-terminal stretch at 1–34 (MRLGCSGRRRRLLRAALLRLVVLVLVAPPRRCAG) is a signal peptide. Positions 67-101 (AGSGGEGDGDRRSSSSSPPPPPHPRGCHVAVDRGR) are disordered. A PPM-type phosphatase domain is found at 92–457 (GCHVAVDRGR…DNVAAVIVPL (366 aa)). The Mn(2+) site is built by Asp138 and Gly139. Positions 286-306 (KKTSVVSGKRRRKRNSNNRDD) are disordered. 2 residues coordinate Mn(2+): Asp397 and Asp448.

Belongs to the PP2C family. Requires Mg(2+) as cofactor. Mn(2+) is required as a cofactor.

It carries out the reaction O-phospho-L-seryl-[protein] + H2O = L-seryl-[protein] + phosphate. It catalyses the reaction O-phospho-L-threonyl-[protein] + H2O = L-threonyl-[protein] + phosphate. The chain is Putative protein phosphatase 2C 76 from Oryza sativa subsp. japonica (Rice).